The following is a 74-amino-acid chain: Peptide BmKb1 (74 aa).

Positions 1–22 are cleaved as a signal peptide; the sequence is MEIKYLLTVFLVLLIVSDHCQA. A Lysine amide modification is found at K40. Positions 46 to 74 are excised as a propeptide; sequence DLNGYIDHFKNFRKRDAELEELLSKLPIY.

This sequence belongs to the non-disulfide-bridged peptide (NDBP) superfamily. Short antimicrobial peptide (group 4) family. Expressed by the venom gland.

It is found in the secreted. Its subcellular location is the target cell membrane. Has antibacterial activity against Gram-positive bacteria S.aureus, M.luteus, B.subtilis, and Gram-negative bacteria E.coli, and P.aeruginosa. This is Peptide BmKb1 from Olivierus martensii (Manchurian scorpion).